The sequence spans 379 residues: Omega-3 fatty acid desaturase, endoplasmic reticulum (379 aa).

The helical transmembrane segment at 52 to 72 (LSYVVRDVIFVATLIGIAIHL) threads the bilayer. The Histidine box-1 signature appears at 97-101 (HDCGH). Positions 133–137 (HKTHH) match the Histidine box-2 motif. The next 2 helical transmembrane spans lie at 213–233 (TLCW…FGSL) and 236–256 (FKIY…VTYL). The Histidine box-3 signature appears at 300 to 304 (HVIHH).

Belongs to the fatty acid desaturase type 1 family.

Its subcellular location is the endoplasmic reticulum membrane. The protein operates within lipid metabolism; polyunsaturated fatty acid biosynthesis. Its function is as follows. ER (microsomal) omega-3 fatty acid desaturase introduces the third double bond in the biosynthesis of 18:3 fatty acids, important constituents of plant membranes. It is thought to use cytochrome b5 as an electron donor and to act on fatty acids esterified to phosphatidylcholine and, possibly, other phospholipids. This chain is Omega-3 fatty acid desaturase, endoplasmic reticulum (FAD3), found in Nicotiana tabacum (Common tobacco).